A 335-amino-acid chain; its full sequence is DNA polymerase beta (335 aa).

Residue lysine 41 forms a Glycyl lysine isopeptide (Lys-Gly) (interchain with G-Cter in ubiquitin) linkage. Lysine 60 provides a ligand contact to K(+). Lysine 60 serves as a coordination point for Na(+). Residue lysine 61 forms a Glycyl lysine isopeptide (Lys-Gly) (interchain with G-Cter in ubiquitin) linkage. K(+)-binding residues include leucine 62 and valine 65. Residues leucine 62 and valine 65 each coordinate Na(+). Lysine 72 acts as the Nucleophile; Schiff-base intermediate with DNA; for 5'-dRP lyase activity in catalysis. Lysine 72 carries the N6-acetyllysine modification. Lysine 81 is covalently cross-linked (Glycyl lysine isopeptide (Lys-Gly) (interchain with G-Cter in ubiquitin)). Omega-N-methylarginine; by PRMT6 is present on arginine 83. Residues threonine 101, valine 103, and isoleucine 106 each contribute to the K(+) site. Positions 101, 103, and 106 each coordinate Na(+). A 2'-deoxyribonucleoside 5'-triphosphate is bound at residue arginine 149. Arginine 152 carries the omega-N-methylarginine; by PRMT6 modification. A 2'-deoxyribonucleoside 5'-triphosphate contacts are provided by serine 180, arginine 183, glycine 189, and aspartate 190. Residues arginine 183 to aspartate 192 form a DNA-binding region. Aspartate 190, aspartate 192, and aspartate 256 together coordinate Mg(2+).

Belongs to the DNA polymerase type-X family. Monomer. Binds single-stranded DNA (ssDNA). Interacts with APEX1, LIG1, LIG3, FEN1, PCNA and XRCC1. Interacts with HUWE1/ARF-BP1, STUB1/CHIP and USP47. Interacts with FAM168A. Mg(2+) serves as cofactor. Post-translationally, methylation by PRMT6 stimulates the polymerase activity by enhancing DNA binding and processivity. In terms of processing, ubiquitinated at Lys-41, Lys-61 and Lys-81: monoubiquitinated by HUWE1/ARF-BP1. Monoubiquitinated protein is then the target of STUB1/CHIP, which catalyzes polyubiquitination from monoubiquitin, leading to degradation by the proteasome. USP47 mediates the deubiquitination of monoubiquitinated protein, preventing polyubiquitination by STUB1/CHIP and its subsequent degradation.

It localises to the nucleus. It is found in the cytoplasm. The enzyme catalyses DNA(n) + a 2'-deoxyribonucleoside 5'-triphosphate = DNA(n+1) + diphosphate. It catalyses the reaction a 5'-end 2'-deoxyribose-2'-deoxyribonucleotide-DNA = (2E,4S)-4-hydroxypenten-2-al-5-phosphate + a 5'-end 5'-phospho-2'-deoxyribonucleoside-DNA + H(+). It carries out the reaction 2'-deoxyribonucleotide-(2'-deoxyribose 5'-phosphate)-2'-deoxyribonucleotide-DNA = a 3'-end 2'-deoxyribonucleotide-(2,3-dehydro-2,3-deoxyribose 5'-phosphate)-DNA + a 5'-end 5'-phospho-2'-deoxyribonucleoside-DNA + H(+). Repair polymerase that plays a key role in base-excision repair. During this process, the damaged base is excised by specific DNA glycosylases, the DNA backbone is nicked at the abasic site by an apurinic/apyrimidic (AP) endonuclease, and POLB removes 5'-deoxyribose-phosphate from the preincised AP site acting as a 5'-deoxyribose-phosphate lyase (5'-dRP lyase); through its DNA polymerase activity, it adds one nucleotide to the 3' end of the arising single-nucleotide gap. Conducts 'gap-filling' DNA synthesis in a stepwise distributive fashion rather than in a processive fashion as for other DNA polymerases. It is also able to cleave sugar-phosphate bonds 3' to an intact AP site, acting as an AP lyase. The sequence is that of DNA polymerase beta (Polb) from Mus musculus (Mouse).